Reading from the N-terminus, the 209-residue chain is Small ribosomal subunit protein uS4 (209 aa).

Residues C9, C12, C26, and C31 each coordinate Zn(2+). Residues 9-31 (CKLCRREGMKLYLKGERCYTDKC) form a C4-type zinc finger. One can recognise an S4 RNA-binding domain in the interval 98–161 (ARLDNVVYRM…RDLEVIKKAI (64 aa)).

The protein belongs to the universal ribosomal protein uS4 family. In terms of assembly, part of the 30S ribosomal subunit. Contacts protein S5. The interaction surface between S4 and S5 is involved in control of translational fidelity. Requires Zn(2+) as cofactor.

One of the primary rRNA binding proteins, it binds directly to 16S rRNA where it nucleates assembly of the body of the 30S subunit. Its function is as follows. With S5 and S12 plays an important role in translational accuracy. The sequence is that of Small ribosomal subunit protein uS4 (rpsD) from Thermotoga maritima (strain ATCC 43589 / DSM 3109 / JCM 10099 / NBRC 100826 / MSB8).